A 659-amino-acid polypeptide reads, in one-letter code: Hemocyanin subunit B (659 aa).

An N-terminal signal peptide occupies residues 1-18 (MVAKWCVLAMCLLVAVGA). Positions 198, 202, and 232 each coordinate Cu cation. N-linked (GlcNAc...) asparagine glycosylation is present at Asn-318. Residues His-353, His-357, and His-393 each contribute to the Cu cation site. Cys-562 and Cys-609 are joined by a disulfide.

It belongs to the tyrosinase family. Hemocyanin subfamily. As to quaternary structure, 36-chain polymer consisting of 6 hexamers, each of which includes 4 different chains, A, B, C and D. As to expression, hemolymph.

It is found in the secreted. The protein resides in the extracellular space. Functionally, hemocyanins are copper-containing oxygen carriers occurring freely dissolved in the hemolymph of many mollusks and arthropods. The chain is Hemocyanin subunit B (HCB) from Scutigera coleoptrata (House centipede).